Reading from the N-terminus, the 336-residue chain is Serpentine receptor class delta-51 (336 aa).

A run of 7 helical transmembrane segments spans residues 14-34 (VYYSLNVTLALSINILLLFIM), 48-68 (YLFNTALFEIIVSLSTYFAQC), 93-113 (CFVTFAVVQCSVVAASFSILL), 133-153 (ATTFIIFSFFPTVMLLFQLLT), 188-208 (AAIIAQSLISLGVYMSPLIAF), 237-257 (GLLIQTLIPFCVYIPPYSYFL), and 275-295 (IFGSFTAFINPLLTFYFVLPY).

This sequence belongs to the nematode receptor-like protein srd family.

Its subcellular location is the membrane. The protein is Serpentine receptor class delta-51 (srd-51) of Caenorhabditis elegans.